A 517-amino-acid chain; its full sequence is UDP-N-acetylmuramyl-tripeptide synthetase (517 aa).

Ser38 serves as a coordination point for UDP-N-acetyl-alpha-D-muramoyl-L-alanyl-D-glutamate. 116-122 (GTKGKTT) serves as a coordination point for ATP. UDP-N-acetyl-alpha-D-muramoyl-L-alanyl-D-glutamate contacts are provided by residues Asn160, 162–163 (TT), Ser189, and Arg197. Lys231 carries the post-translational modification N6-carboxylysine.

Belongs to the MurCDEF family. MurE subfamily. Carboxylation is probably crucial for Mg(2+) binding and, consequently, for the gamma-phosphate positioning of ATP.

The protein resides in the cytoplasm. Its pathway is cell wall biogenesis; peptidoglycan biosynthesis. In terms of biological role, catalyzes the addition of an amino acid to the nucleotide precursor UDP-N-acetylmuramoyl-L-alanyl-D-glutamate (UMAG) in the biosynthesis of bacterial cell-wall peptidoglycan. This Lacticaseibacillus paracasei (strain ATCC 334 / BCRC 17002 / CCUG 31169 / CIP 107868 / KCTC 3260 / NRRL B-441) (Lactobacillus paracasei) protein is UDP-N-acetylmuramyl-tripeptide synthetase.